Reading from the N-terminus, the 506-residue chain is Chromodomain Y-like protein 2 (506 aa).

One can recognise a Chromo domain in the interval 7 to 67 (YEVERIVDKR…LHMSKDKRIK (61 aa)). Positions 64-177 (KRIKSGKQSS…RHFGNGSHQP (114 aa)) are disordered. Positions 88–98 (KLSHRPSDPGK) are enriched in basic and acidic residues. Positions 101–120 (GTSHKRKRINPPLAKPKKGY) are enriched in basic residues. Residues 133–143 (KTVSYRTTPSG) show a composition bias toward polar residues.

As to quaternary structure, interacts (via chromo domain) with histone H3K9me3. Ubiquitously expressed.

The protein localises to the nucleus. The protein is Chromodomain Y-like protein 2 (CDYL2) of Homo sapiens (Human).